The following is a 100-amino-acid chain: Large ribosomal subunit protein eL21 (100 aa).

A disordered region spans residues 1–21 (MVKRTHGYRYKSRKLLRKKPR).

Belongs to the eukaryotic ribosomal protein eL21 family.

The polypeptide is Large ribosomal subunit protein eL21 (Pyrobaculum islandicum (strain DSM 4184 / JCM 9189 / GEO3)).